Consider the following 162-residue polypeptide: Lymphocyte antigen 86 (162 aa).

Positions 1–19 are cleaved as a signal peptide; sequence MNGVAAALLVWILTSPSSS. Cystine bridges form between Cys-33-Cys-58, Cys-45-Cys-154, and Cys-102-Cys-112. An N-linked (GlcNAc...) asparagine glycan is attached at Asn-96. Asn-156 carries N-linked (GlcNAc...) asparagine glycosylation.

M-shaped tetramer of two CD180-LY86 heterodimers. In terms of tissue distribution, highly expressed in spleen, liver, brain and thymus, and at lower levels in kidney.

Its subcellular location is the secreted. It localises to the extracellular space. Functionally, may cooperate with CD180 and TLR4 to mediate the innate immune response to bacterial lipopolysaccharide (LPS) and cytokine production. Important for efficient CD180 cell surface expression. This is Lymphocyte antigen 86 (Ly86) from Mus musculus (Mouse).